A 699-amino-acid chain; its full sequence is Elongation factor G (699 aa).

In terms of domain architecture, tr-type G spans 8–283; sequence EHIRNIGICA…AVVDFLPSPI (276 aa). GTP-binding positions include 17-24, 81-85, and 135-138; these read AHIDAGKT, DTPGH, and NKMD.

The protein belongs to the TRAFAC class translation factor GTPase superfamily. Classic translation factor GTPase family. EF-G/EF-2 subfamily.

The protein localises to the cytoplasm. In terms of biological role, catalyzes the GTP-dependent ribosomal translocation step during translation elongation. During this step, the ribosome changes from the pre-translocational (PRE) to the post-translocational (POST) state as the newly formed A-site-bound peptidyl-tRNA and P-site-bound deacylated tRNA move to the P and E sites, respectively. Catalyzes the coordinated movement of the two tRNA molecules, the mRNA and conformational changes in the ribosome. The polypeptide is Elongation factor G (Rickettsia conorii (strain ATCC VR-613 / Malish 7)).